A 117-amino-acid polypeptide reads, in one-letter code: Non-specific lipid-transfer protein B (117 aa).

The first 25 residues, 1–25 (MAGLVKLSCLVLACMIVAGPIATNA), serve as a signal peptide directing secretion. Intrachain disulfides connect Cys-29–Cys-76, Cys-39–Cys-53, Cys-54–Cys-99, and Cys-74–Cys-113.

This sequence belongs to the plant LTP family.

Plant non-specific lipid-transfer proteins transfer phospholipids as well as galactolipids across membranes. May play a role in wax or cutin deposition in the cell walls of expanding epidermal cells and certain secretory tissues. This chain is Non-specific lipid-transfer protein B (WAX9B), found in Brassica oleracea var. italica (Broccoli).